Here is a 429-residue protein sequence, read N- to C-terminus: E3 ubiquitin-protein ligase ZNRF4 (429 aa).

Residues 1–27 (MPLCRPEHLMPRASRVPVAASLPLSHA) form the signal peptide. Topologically, residues 28–250 (VIPTQLPSRP…PPCHDLGCHP (223 aa)) are lumenal. Positions 30–67 (PTQLPSRPGHRPPGRPRRCPKASCLPPPVGPSSTQTAK) are disordered. Residues 37–49 (PGHRPPGRPRRCP) are compositionally biased toward basic residues. Residues asparagine 107, asparagine 152, and asparagine 229 are each glycosylated (N-linked (GlcNAc...) asparagine). Residues 151 to 223 (GNRSLGAIVL…VSEAASQDLR (73 aa)) form the PA domain. Residues 251–271 (VLTVSWVLGCTLALVVSAFFV) traverse the membrane as a helical segment. Over 272–429 (LNHLWLWAQA…SSAPPEAPGQ (158 aa)) the chain is Cytoplasmic. An RING-type; atypical zinc finger spans residues 309 to 352 (CAICLDEYEEGDQLKILPCSHTYHCKCIDPWFSQAPRRSCPVCK).

As to quaternary structure, interacts with CANX.

The protein localises to the endoplasmic reticulum membrane. It carries out the reaction S-ubiquitinyl-[E2 ubiquitin-conjugating enzyme]-L-cysteine + [acceptor protein]-L-lysine = [E2 ubiquitin-conjugating enzyme]-L-cysteine + N(6)-ubiquitinyl-[acceptor protein]-L-lysine.. The protein operates within protein modification; protein ubiquitination. Its function is as follows. E3 ubiquitin-protein ligase that acts as a negative regulator of NOD2 signaling by mediating ubiquitination and degradation of RIPK2. Also catalyzes ubiquitination and proteasomal degradation of CANX within the endoplasmic reticulum. Could have a role in spermatogenesis. This is E3 ubiquitin-protein ligase ZNRF4 from Homo sapiens (Human).